Consider the following 70-residue polypeptide: Large ribosomal subunit protein eL38 (70 aa).

The protein belongs to the eukaryotic ribosomal protein eL38 family.

This is Large ribosomal subunit protein eL38 (RpL38) from Spodoptera frugiperda (Fall armyworm).